The following is a 493-amino-acid chain: Sorting nexin-4 (493 aa).

The segment at 1 to 77 (MAVIDQDNFS…ILDCTVSDPH (77 aa)) is disordered. The span at 7 to 28 (DNFSNISWHSEQNAESAASTAQ) shows a compositional bias: polar residues. The segment covering 56–65 (MEHDELDHSG) has biased composition (basic and acidic residues). In terms of domain architecture, PX spans 68–190 (ILDCTVSDPH…AFLESPDWNA (123 aa)). The a 1,2-diacyl-sn-glycero-3-phospho-(1D-myo-inositol-3-phosphate) site is built by Arg-111, Thr-113, Lys-137, and Arg-156. 3 coiled-coil regions span residues 248-292 (EIKE…QKLI), 338-363 (SGTLKNLLKAREQKQLDYEQLTEYLN), and 405-442 (EQARRDRQRKLELRIEELTREVEVARNESESFAEQVSR).

This sequence belongs to the sorting nexin family.

Its subcellular location is the cytoplasm. It localises to the membrane. The protein localises to the endosome membrane. In terms of biological role, sorting nexin, involved in the separation or division of vacuoles throughout the entire life cycle of the cells. Involved in retrieval of late-Golgi SNAREs from post-Golgi endosomes to the trans-Golgi network, for cytoplasm to vacuole transport (Cvt), and autophagy of large cargos including mitophagy, pexophagy and glycophagy. The protein is Sorting nexin-4 (vsp-5) of Neurospora crassa (strain ATCC 24698 / 74-OR23-1A / CBS 708.71 / DSM 1257 / FGSC 987).